Reading from the N-terminus, the 78-residue chain is Putative DNA-binding protein MT0521 (78 aa).

A DNA-binding region (H-T-H motif) is located at residues 24 to 45 (LLTVAEVAALMRVSKMTVYRLV).

The protein is Putative DNA-binding protein MT0521 of Mycobacterium tuberculosis (strain CDC 1551 / Oshkosh).